The following is a 329-amino-acid chain: Meiotic drive suppressor wtf21 (329 aa).

The tract at residues 1 to 68 (MKNNYTSLKS…RENNPSRSTD (68 aa)) is disordered. Basic and acidic residues predominate over residues 19–30 (KTDHEIDLEKGP). A run of 5 helical transmembrane segments spans residues 73–95 (FLIK…ICYL), 110–132 (WTLF…YFYE), 165–182 (IIIW…FVYI), 192–214 (ALIC…VCIP), and 290–312 (GIAF…IRGA).

It belongs to the WTF family. As to quaternary structure, homomer. Interacts with other proteins that exhibit high sequence similarity.

The protein resides in the spore membrane. It is found in the vacuole membrane. Functionally, acts as a suppressor component of the dual wtf meiotic drive system, and can suppress but not confer meiotic drive by compatible poisons. Wtf meiotic drive systems promote unequal transmission of alleles from the parental zygote to progeny spores by encoding a poison and an antidote from the same locus; the poison is trans-acting and forms toxic aggregates in all spores within an ascus, wherease the antidote is spore-specific and targets aggregates for degradation by the vacuole. Meiotic drive by wtf systems therefore lead to poisoning of all progeny that do not inherit the dual poison/antidote allele, or express a compatible antidote. The sequence is that of Meiotic drive suppressor wtf21 from Schizosaccharomyces pombe (strain 972 / ATCC 24843) (Fission yeast).